Consider the following 1290-residue polypeptide: DNA-directed RNA polymerase subunit beta' (1290 aa).

Cys-68, Cys-70, Cys-83, and Cys-86 together coordinate Zn(2+). Mg(2+) is bound by residues Asp-530, Asp-532, and Asp-534. 4 residues coordinate Zn(2+): Cys-909, Cys-985, Cys-992, and Cys-995.

This sequence belongs to the RNA polymerase beta' chain family. In terms of assembly, the RNAP catalytic core consists of 2 alpha, 1 beta, 1 beta' and 1 omega subunit. When a sigma factor is associated with the core the holoenzyme is formed, which can initiate transcription. The cofactor is Mg(2+). Zn(2+) serves as cofactor.

It carries out the reaction RNA(n) + a ribonucleoside 5'-triphosphate = RNA(n+1) + diphosphate. Functionally, DNA-dependent RNA polymerase catalyzes the transcription of DNA into RNA using the four ribonucleoside triphosphates as substrates. In Mycoplasma pneumoniae (strain ATCC 29342 / M129 / Subtype 1) (Mycoplasmoides pneumoniae), this protein is DNA-directed RNA polymerase subunit beta'.